We begin with the raw amino-acid sequence, 748 residues long: Photosystem I P700 chlorophyll a apoprotein A1 (748 aa).

8 consecutive transmembrane segments (helical) span residues 70 to 93 (VFSA…FHGA), 156 to 179 (LYST…YHYH), 195 to 219 (LNHH…HVSL), 291 to 309 (TAHH…GHQY), 346 to 369 (WHAQ…HHMY), 385 to 411 (LSLF…IFLV), 433 to 455 (AIIS…LYIH), and 530 to 548 (FLVH…LILL). Residues Cys572 and Cys581 each contribute to the [4Fe-4S] cluster site. The next 2 helical transmembrane spans lie at 588 to 609 (HVFL…HFSW) and 662 to 684 (LSAY…MFLF). His673 is a chlorophyll a' binding site. Chlorophyll a contacts are provided by Met681 and Tyr689. Trp690 lines the phylloquinone pocket. The chain crosses the membrane as a helical span at residues 722-742 (AVGVAHYLLGGIATTWAFFLA).

The protein belongs to the PsaA/PsaB family. The PsaA/B heterodimer binds the P700 chlorophyll special pair and subsequent electron acceptors. PSI consists of a core antenna complex that captures photons, and an electron transfer chain that converts photonic excitation into a charge separation. The eukaryotic PSI reaction center is composed of at least 11 subunits. Requires P700 is a chlorophyll a/chlorophyll a' dimer, A0 is one or more chlorophyll a, A1 is one or both phylloquinones and FX is a shared 4Fe-4S iron-sulfur center. as cofactor.

It localises to the plastid. The protein resides in the chloroplast thylakoid membrane. It catalyses the reaction reduced [plastocyanin] + hnu + oxidized [2Fe-2S]-[ferredoxin] = oxidized [plastocyanin] + reduced [2Fe-2S]-[ferredoxin]. PsaA and PsaB bind P700, the primary electron donor of photosystem I (PSI), as well as the electron acceptors A0, A1 and FX. PSI is a plastocyanin-ferredoxin oxidoreductase, converting photonic excitation into a charge separation, which transfers an electron from the donor P700 chlorophyll pair to the spectroscopically characterized acceptors A0, A1, FX, FA and FB in turn. Oxidized P700 is reduced on the lumenal side of the thylakoid membrane by plastocyanin. The polypeptide is Photosystem I P700 chlorophyll a apoprotein A1 (Chaetosphaeridium globosum (Charophycean green alga)).